A 72-amino-acid chain; its full sequence is DNA-directed RNA polymerase subunit omega (72 aa).

The protein belongs to the RNA polymerase subunit omega family. The RNAP catalytic core consists of 2 alpha, 1 beta, 1 beta' and 1 omega subunit. When a sigma factor is associated with the core the holoenzyme is formed, which can initiate transcription.

It catalyses the reaction RNA(n) + a ribonucleoside 5'-triphosphate = RNA(n+1) + diphosphate. In terms of biological role, promotes RNA polymerase assembly. Latches the N- and C-terminal regions of the beta' subunit thereby facilitating its interaction with the beta and alpha subunits. The polypeptide is DNA-directed RNA polymerase subunit omega (rpoZ) (Clostridium tetani (strain Massachusetts / E88)).